The following is a 267-amino-acid chain: Indole-3-glycerol phosphate synthase (267 aa).

This sequence belongs to the TrpC family.

It catalyses the reaction 1-(2-carboxyphenylamino)-1-deoxy-D-ribulose 5-phosphate + H(+) = (1S,2R)-1-C-(indol-3-yl)glycerol 3-phosphate + CO2 + H2O. Its pathway is amino-acid biosynthesis; L-tryptophan biosynthesis; L-tryptophan from chorismate: step 4/5. In Polynucleobacter necessarius subsp. necessarius (strain STIR1), this protein is Indole-3-glycerol phosphate synthase.